Here is a 377-residue protein sequence, read N- to C-terminus: MSCSNLTMLVSSKPSLSDSSALSFRSSVSPFQLPNHNTSGPSNPSRSSSVTPVHCGLRDLRDRIESVKNTQKITEAMKLVAAAKVRRAQEAVVGARPFSETLVEVLYNINEQLQTDDIDVPLTKVRPVKKVALVVVTGDRGLCGGFNNYLIKKAEARIRDLKALGIDYTIISVGKKGNSYFIRRPYIPVDKFLEGSNLPTAKDAQAIADDVFSLFVSEEVDKVELLYTKFVSLVKSEPVIHTLLPLSPKGEICDINGNCVDAANDEFFRLTTKEGKLTVERDIIRTKTTDFSPILQFEQDPVQILDALLPLYLNSQILRALQESLASELAARMSAMSSATDNATELKKNLSRVYNRQRQAKITGEILEIVAGADALV.

A chloroplast-targeting transit peptide spans 1 to 55 (MSCSNLTMLVSSKPSLSDSSALSFRSSVSPFQLPNHNTSGPSNPSRSSSVTPVHC). The interval 30–52 (PFQLPNHNTSGPSNPSRSSSVTP) is disordered. The segment covering 37–52 (NTSGPSNPSRSSSVTP) has biased composition (low complexity). C143 is an active-site residue. Cysteines 253 and 259 form a disulfide.

Belongs to the ATPase gamma chain family. As to quaternary structure, F-type ATPases have 2 components, CF(1) - the catalytic core - and CF(0) - the membrane proton channel. CF(1) has five subunits: alpha(3), beta(3), gamma(1), delta(1), epsilon(1). CF(0) has four main subunits: a, b, b' and c.

The protein localises to the plastid. It localises to the chloroplast thylakoid membrane. Its function is as follows. Produces ATP from ADP in the presence of a proton gradient across the membrane. The gamma chain is believed to be important in regulating ATPase activity and the flow of protons through the CF(0) complex. The polypeptide is ATP synthase gamma chain, chloroplastic (ATPC) (Nicotiana tabacum (Common tobacco)).